The following is a 180-amino-acid chain: Large ribosomal subunit protein uL5 (180 aa).

It belongs to the universal ribosomal protein uL5 family. Part of the 50S ribosomal subunit; part of the 5S rRNA/L5/L18/L25 subcomplex. Contacts the 5S rRNA and the P site tRNA. Forms a bridge to the 30S subunit in the 70S ribosome.

In terms of biological role, this is one of the proteins that bind and probably mediate the attachment of the 5S RNA into the large ribosomal subunit, where it forms part of the central protuberance. In the 70S ribosome it contacts protein S13 of the 30S subunit (bridge B1b), connecting the 2 subunits; this bridge is implicated in subunit movement. Contacts the P site tRNA; the 5S rRNA and some of its associated proteins might help stabilize positioning of ribosome-bound tRNAs. The protein is Large ribosomal subunit protein uL5 of Xanthomonas axonopodis pv. citri (strain 306).